The chain runs to 447 residues: MDLRRIMETVNMIDNENLDLRTTTMGISLLDCIDSDSDRACQKIYDKITTKAENLVKVARELETEYGIPIANKRITVTPISLIAAASGDSDYVKYAVTLDKAAKAVGVDLIGGFSALVHKGYQNGDRVLIKSIPQALKETERVCSSVNVGSTRSGINMDAVKEMGQIVIENEKINPLNNGNLVIFCNAVEDNPFMAGGFHGVGESDVALNVGVSGPGVVKTALEKVKGESMDVVAETIKQTAFKVTRMGQLVGQEASKRLGVDFGIVDLSLAPTPAQGDSVANILEEIGLESVGTHGTTAALAMLNDAVKKGGIMACSHVGGLSGAFIPESEDAGMIAAAEKGILTVDKLEAMTAVCSVGLDMIAVPGDTPAETISAMIADEAAIGMINNKTTAVRVIPVPGKDVGDSIEFGGLFGYAPIMPVHKESSAAMINRGGRIPAPVHSFKN.

This sequence belongs to the UPF0210 family. As to quaternary structure, homodimer.

The sequence is that of UPF0210 protein LBUL_0934 from Lactobacillus delbrueckii subsp. bulgaricus (strain ATCC BAA-365 / Lb-18).